Consider the following 251-residue polypeptide: Haloacid dehalogenase-like hydrolase domain-containing protein 3 (251 aa).

K15 bears the N6-acetyllysine; alternate mark. K15 carries the post-translational modification N6-succinyllysine; alternate. At K130 the chain carries N6-acetyllysine.

It belongs to the HAD-like hydrolase superfamily.

This chain is Haloacid dehalogenase-like hydrolase domain-containing protein 3 (Hdhd3), found in Mus musculus (Mouse).